The primary structure comprises 519 residues: Trichothecene 15-O-acetyltransferase TRI3 (519 aa).

Histidine 414 is a binding site for 15-deacetylcalonectrin.

It belongs to the trichothecene O-acetyltransferase family.

The protein operates within sesquiterpene biosynthesis; trichothecene biosynthesis. Functionally, 15-O-acetyltransferase; part of the core gene cluster that mediates the biosynthesis of trichothecenes, a very large family of chemically related bicyclic sesquiterpene compounds acting as mycotoxins, including T2-toxin. The biosynthesis of trichothecenes begins with the cyclization of farnesyl diphosphate to trichodiene and is catalyzed by the trichodiene synthase TRI5. Trichodiene undergoes a series of oxygenations catalyzed by the cytochrome P450 monooxygenase TRI4. TRI4 controls the addition of four oxygens at C-2, C-3, C-11, and the C-12, C-13-epoxide to form the intermediate isotrichotriol. Isotrichotriol then undergoes a non-enzymatic isomerization and cyclization to form isotrichodermol. During this process, the oxygen at the C-2 position becomes the pyran ring oxygen and the hydroxyl group at C-11 is lost. More complex type A trichothecenes are built by modifying isotrichodermol through a series of paired hydroxylation and acetylation or acylation steps. Isotrichodermol is converted to isotrichodermin by the acetyltransferase TRI101. TRI101 encodes a C-3 transacetylase that acts as a self-protection or resistance factor during biosynthesis and that the presence of a free C-3 hydroxyl group is a key component of Fusarium trichothecene phytotoxicity. A second hydroxyl group is added to C-15 by the trichothecene C-15 hydroxylase TRI11, producing 15-decalonectrin, which is then acetylated by TRI3, producing calonectrin. A third hydroxyl group is added at C-4 by the cytochrome P450 monooxygenase TRI13, converting calonectrin to 3,15-diacetoxyspirpenol, which is subsequently acetylated by the acetyltransferase TRI7. A fourth hydroxyl group is added to C-8 by the cytochrome P450 monooxygenase TRI1, followed by the addition of an isovaleryl moiety by TRI16. Finally, the acetyl group is removed from the C-3 position by the trichothecene C-3 esterase TRI8 to produce T-2 toxin. The sequence is that of Trichothecene 15-O-acetyltransferase TRI3 from Fusarium sporotrichioides.